Consider the following 445-residue polypeptide: Rab GDP dissociation inhibitor beta (445 aa).

M1 carries the post-translational modification N-acetylmethionine. K57 is subject to N6-succinyllysine. K112 carries the post-translational modification N6-acetyllysine. S130 is subject to Phosphoserine. An N6-acetyllysine modification is found at K269. S382 is modified (phosphoserine).

This sequence belongs to the Rab GDI family. Interacts with RHOH. Interacts with the GDP-bound inactive forms of RAB3A, RAB3B, RAB3C, RAB5A, RAB5B, RAB5C, RAB8A, RAB8B, RAB10, RAB12, RAB35, and RAB43; binds RAB3D to a lesser extent. Interacts with DZIP1; this interaction negatively regulates the interaction of GDI2 with GDP-bound RAB8A. Ubiquitously expressed.

The protein resides in the cytoplasm. Its subcellular location is the membrane. It is found in the golgi apparatus. The protein localises to the trans-Golgi network. Functionally, GDP-dissociation inhibitor preventing the GDP to GTP exchange of most Rab proteins. By keeping these small GTPases in their inactive GDP-bound form regulates intracellular membrane trafficking. Negatively regulates protein transport to the cilium and ciliogenesis through the inhibition of RAB8A. This Bos taurus (Bovine) protein is Rab GDP dissociation inhibitor beta (GDI2).